Consider the following 412-residue polypeptide: Light-independent protochlorophyllide reductase subunit N (412 aa).

Residues C16, C41, and C102 each contribute to the [4Fe-4S] cluster site.

Belongs to the BchN/ChlN family. In terms of assembly, protochlorophyllide reductase is composed of three subunits; ChlL, ChlN and ChlB. Forms a heterotetramer of two ChlB and two ChlN subunits. Requires [4Fe-4S] cluster as cofactor.

It catalyses the reaction chlorophyllide a + oxidized 2[4Fe-4S]-[ferredoxin] + 2 ADP + 2 phosphate = protochlorophyllide a + reduced 2[4Fe-4S]-[ferredoxin] + 2 ATP + 2 H2O. It participates in porphyrin-containing compound metabolism; chlorophyll biosynthesis (light-independent). In terms of biological role, component of the dark-operative protochlorophyllide reductase (DPOR) that uses Mg-ATP and reduced ferredoxin to reduce ring D of protochlorophyllide (Pchlide) to form chlorophyllide a (Chlide). This reaction is light-independent. The NB-protein (ChlN-ChlB) is the catalytic component of the complex. This chain is Light-independent protochlorophyllide reductase subunit N, found in Synechococcus sp. (strain RCC307).